A 1220-amino-acid chain; its full sequence is Plasma membrane calcium-transporting ATPase 1 (1220 aa).

G2 is modified (N-acetylglycine). At 2–105 the chain is on the cytoplasmic side; sequence GDMANNSVAY…KTFLQLVWEA (104 aa). A phosphoserine mark is found at S8 and S17. The helical transmembrane segment at 106–126 threads the bilayer; the sequence is LQDVTLIILEIAAIVSLGLSF. The Extracellular portion of the chain corresponds to 127-154; that stretch reads YQPPEGDNALCGEVSVGEEEGEGETGWI. Residues 155-175 form a helical membrane-spanning segment; it reads EGAAILLSVVCVVLVTAFNDW. Residues 176 to 366 lie on the Cytoplasmic side of the membrane; the sequence is SKEKQFRGLQ…KEKSVLQGKL (191 aa). The tract at residues 297-356 is disordered; sequence EEEKKDEKKKEKKNKKQDGAIENRNKAKAQDGAAMEMQPLKSEEGGDGDEKDKKKANLPK. Composition is skewed to basic and acidic residues over residues 312-325 and 337-356; these read KQDG…KAKA and KSEE…NLPK. S338 carries the phosphoserine modification. A helical transmembrane segment spans residues 367 to 386; the sequence is TKLAVQIGKAGLLMSAITVI. Residues 387–418 are Extracellular-facing; the sequence is ILVLYFVIDTFWVQKRPWLAECTPIYIQYFVK. The helical transmembrane segment at 419 to 439 threads the bilayer; it reads FFIIGVTVLVVAVPEGLPLAV. The Cytoplasmic segment spans residues 440-855; sequence TISLAYSVKK…RNVYDSISKF (416 aa). D475 acts as the 4-aspartylphosphate intermediate in catalysis. Mg(2+)-binding residues include D475, T477, and D797. Residues 856 to 876 traverse the membrane as a helical segment; sequence LQFQLTVNVVAVIVAFTGACI. Over 877–882 the chain is Extracellular; sequence TQDSPL. Residues 883–903 traverse the membrane as a helical segment; sequence KAVQMLWVNLIMDTLASLALA. At 904–927 the chain is on the cytoplasmic side; that stretch reads TEPPTESLLLRKPYGRNKPLISRT. The helical transmembrane segment at 928–948 threads the bilayer; sequence MMKNILGHAFYQLVVVFTLLF. At 949-971 the chain is on the extracellular side; the sequence is AGEKFFDIDSGRNAPLHAPPSEH. Residues 972 to 991 traverse the membrane as a helical segment; the sequence is YTIVFNTFVLMQLFNEINAR. Residues 992 to 1005 lie on the Cytoplasmic side of the membrane; sequence KIHGERNVFEGIFN. The helical transmembrane segment at 1006–1027 threads the bilayer; the sequence is NAIFCTIVLGTFVVQIIIVQFG. The Extracellular portion of the chain corresponds to 1028–1039; sequence GKPFSCSELSIE. The chain crosses the membrane as a helical span at residues 1040–1060; that stretch reads QWLWSIFLGMGTLLWGQLIST. At 1061–1220 the chain is on the cytoplasmic side; that stretch reads IPTSRLKFLK…SPLHSLETSL (160 aa). Residues 1100 to 1117 form a calmodulin-binding subdomain A region; it reads LRRGQILWFRGLNRIQTQ. T1116 is modified (phosphothreonine; by PKC). Positions 1118–1220 are required for basolateral membrane targeting; sequence IRVVNAFRSS…SPLHSLETSL (103 aa). Phosphoserine occurs at positions 1140 and 1155. The segment at 1162-1220 is disordered; it reads IDDTDAEDDAPTKRNSSPPPSPNKNNNAVDSGIHLTIEMNKSATSSSPGSPLHSLETSL. T1165 bears the Phosphothreonine mark. Residue S1177 is modified to Phosphoserine; by PKA. Residues S1178 and S1182 each carry the phosphoserine modification. A compositionally biased stretch (polar residues) spans 1200-1220; it reads MNKSATSSSPGSPLHSLETSL.

Belongs to the cation transport ATPase (P-type) (TC 3.A.3) family. Type IIB subfamily. In terms of assembly, monomer. Dimer. Oligomer. Calmodulin binding. Interacts with PDZD11. Interacts with SLC35G1 and STIM1. Interacts with YWHAE; interacts with the monomeric and dimeric forms of the YWHAE but prefer the monomer form; this interaction inhibits calcium-transporting ATPase activity. Interacts with NPTN; this interaction stabilizes ATP2B1 and increases ATPase activity; this interaction controls T cell calcium homeostasis following T cell activation. Interacts with EPB41; regulates small intestinal calcium absorption through regulation of membrane expression of ATP2B1. Isoform B is ubiquitously expressed. Isoforms A and E have only been found in brain cortex. Isoform C is found in brain cortex, skeletal muscle and heart muscle. Isoform D has only been found in fetal skeletal muscle. Isoform K has been found in small intestine and liver. Isoform B is expressed in hair cells of inner ear.

Its subcellular location is the cell membrane. The protein localises to the basolateral cell membrane. The protein resides in the synapse. It is found in the presynaptic cell membrane. It localises to the cytoplasmic vesicle. Its subcellular location is the secretory vesicle. The protein localises to the synaptic vesicle membrane. The enzyme catalyses Ca(2+)(in) + ATP + H2O = Ca(2+)(out) + ADP + phosphate + H(+). Its function is as follows. Catalyzes the hydrolysis of ATP coupled with the transport of calcium from the cytoplasm to the extracellular space thereby maintaining intracellular calcium homeostasis. Plays a role in blood pressure regulation through regulation of intracellular calcium concentration and nitric oxide production leading to regulation of vascular smooth muscle cells vasoconstriction. Positively regulates bone mineralization through absorption of calcium from the intestine. Plays dual roles in osteoclast differentiation and survival by regulating RANKL-induced calcium oscillations in preosteoclasts and mediating calcium extrusion in mature osteoclasts. Regulates insulin sensitivity through calcium/calmodulin signaling pathway by regulating AKT1 activation and NOS3 activation in endothelial cells. May play a role in synaptic transmission by modulating calcium and proton dynamics at the synaptic vesicles. In Rattus norvegicus (Rat), this protein is Plasma membrane calcium-transporting ATPase 1.